We begin with the raw amino-acid sequence, 122 residues long: NADH-quinone oxidoreductase subunit A (122 aa).

The next 3 membrane-spanning stretches (helical) occupy residues 10-30 (LIIF…LTAG), 67-87 (FALL…WAVV), and 91-111 (LGLF…IGLI).

This sequence belongs to the complex I subunit 3 family. In terms of assembly, NDH-1 is composed of 14 different subunits. Subunits NuoA, H, J, K, L, M, N constitute the membrane sector of the complex.

Its subcellular location is the cell membrane. The catalysed reaction is a quinone + NADH + 5 H(+)(in) = a quinol + NAD(+) + 4 H(+)(out). Functionally, NDH-1 shuttles electrons from NADH, via FMN and iron-sulfur (Fe-S) centers, to quinones in the respiratory chain. The immediate electron acceptor for the enzyme in this species is believed to be a menaquinone. Couples the redox reaction to proton translocation (for every two electrons transferred, four hydrogen ions are translocated across the cytoplasmic membrane), and thus conserves the redox energy in a proton gradient. The polypeptide is NADH-quinone oxidoreductase subunit A (Geobacillus kaustophilus (strain HTA426)).